We begin with the raw amino-acid sequence, 244 residues long: Sperm-egg fusion protein Juno (244 aa).

Residues 1 to 19 (MAQWWLILLGLWTVLPSLA) form the signal peptide. Disulfide bonds link Cys-27–Cys-55, Cys-47–Cys-95, Cys-56–Cys-99, Cys-79–Cys-166, Cys-86–Cys-137, Cys-126–Cys-200, Cys-130–Cys-180, and Cys-143–Cys-160. Residues 62-81 (WEAHLDEPLLFNFSMTHCGL) are important for interaction with IZUMO1. N-linked (GlcNAc...) asparagine glycosylation occurs at Asn-73. Residues 223–244 (SASAPQLSYSITAFSLCLLLHA) constitute a propeptide that is removed on maturation.

Belongs to the folate receptor family. Monomer. Interacts with IZUMO1; the interaction is direct. IZUMO1 and IZUMO1R/JUNO form a complex with 1:1 stoichiometry. Interacts with FCRL3/MAIA; FCRL3/MAIA replaces IZUMO1R/JUNO as IZUMO1 receptor after sperm-egg adhesion, thereby permitting species-specific gamete fusion. Interacts with WDR54. The protein is rapidly cleaved following fertilization, being only weakly detectable in zona-intact fertilized eggs at telophase II and undetectable at the pronuclear stage. Sheding is probably required to block to polyspermy and ensuring egg fusion with a single sperm. Expressed in the oocyte (at protein level).

It is found in the cell membrane. The protein resides in the cell projection. The protein localises to the microvillus membrane. Functionally, receptor for IZUMO1 present at the cell surface of oocytes (oolemma), which is essential for species-specific gamete recognition and fertilization. The IZUMO1:IZUMO1R/JUNO interaction is a necessary adhesion event between sperm and egg that is required for fertilization but is not sufficient for cell fusion. The ligand-receptor interaction probably does not act as a membrane 'fusogen'. Does not bind folate. This chain is Sperm-egg fusion protein Juno (Izumo1r), found in Rattus norvegicus (Rat).